The following is a 145-amino-acid chain: MNMDFNLFMNDIVRQARQEITAAGYTELKTAEEVDEALTKKGTTLVMVNSVCGCAGGIARPAAYHSVHYDKRPDQLVTVFAGQDKEATARARDYFEGYPPSSPSFAILKDGKIMKMVERHEIEGHEPMAVVAKLQEAFEEYCEEV.

Residues C52 and C54 each act as nucleophile in the active site. At C52 the chain carries S-bacillithiol cysteine disulfide. The CXC active site motif signature appears at 52–54; sequence CGC. C52 and C54 are disulfide-bonded.

Belongs to the bacilliredoxin family. As to quaternary structure, interacts with BrxC. Post-translationally, N-terminal Cys of the CXC active site motif can react with bacillithiol (BSH) to form mixed disulfides. S-bacillithiolation protects Cys residues against overoxidation by acting as a redox switch in response to oxidative stress.

In terms of biological role, S-bacillithiolation is the formation of mixed disulfide bonds between protein thiols and the general thiol reductant bacillithiol (BSH) under oxidative stress. BSH is an equivalent of glutathione (GSH) in Firmicutes. This protein is a dithiol bacilliredoxin, which debacillithiolates (removes BSH) the S-bacillithiolated OhrR (OhrR-SSB) in vitro and in vivo NaOCl-generated S-bacillithiolated MetE (MetE-SSB). Involved in maintaining redox homeostasis in response to disulfide stress conditions. In Bacillus subtilis (strain 168), this protein is Bacilliredoxin BrxB.